The chain runs to 323 residues: MGNLLKVLTREIENYPHFFLDFENAQPTDGEREVWNQISAVLQDSESMLADLQAYKGAGQEIRDAIQNPNDIQLQEKAWNSVCPLVVRLKRFYEFSLRLEKALQSLLESLTCPPYTPTQHLEREQALAKEFAEILHFTLRFDELKMRNPAIQNDFSYYRRTISRNRINNMHLDIENEVNNEMANRMSLFYAEATPMLKTLSNATTHFVSENKTLPIENTTDCLSTMASVCKVMLETPEYRSRFTSEETLMFCMRVMVGVIILYDHVHPVGAFSKTSKIDMKGCIKVLKEQPPDTVEGLLNALRFTTKHLNDESTSKQIRAMLQ.

The protein belongs to the CYRI family.

The protein localises to the membrane. May negatively regulate RAC1 signaling and RAC1-driven cytoskeletal remodeling. May regulate chemotaxis, cell migration and epithelial polarization by controlling the polarity, plasticity, duration and extent of protrusions. The polypeptide is CYFIP-related Rac1 interactor A (CYRIA) (Gallus gallus (Chicken)).